Consider the following 54-residue polypeptide: VVIVDCSDYPTHGCTLELKPICGSDNQTYSNKCGFCNAVAQSNGTLTLSHFGKC.

One can recognise a Kazal-like domain in the interval 4 to 54 (VDCSDYPTHGCTLELKPICGSDNQTYSNKCGFCNAVAQSNGTLTLSHFGKC). Disulfide bonds link C6–C36, C14–C33, and C22–C54. An N-linked (GlcNAc...) asparagine glycan is attached at N43.

The protein localises to the secreted. The sequence is that of Ovomucoid from Aepypodius arfakianus (Wattled brush turkey).